Reading from the N-terminus, the 515-residue chain is Bifunctional purine biosynthesis protein PurH (515 aa).

In terms of domain architecture, MGS-like spans 1 to 145 (MTKRALISVS…KNHASVTVVV (145 aa)).

The protein belongs to the PurH family.

It catalyses the reaction (6R)-10-formyltetrahydrofolate + 5-amino-1-(5-phospho-beta-D-ribosyl)imidazole-4-carboxamide = 5-formamido-1-(5-phospho-D-ribosyl)imidazole-4-carboxamide + (6S)-5,6,7,8-tetrahydrofolate. It carries out the reaction IMP + H2O = 5-formamido-1-(5-phospho-D-ribosyl)imidazole-4-carboxamide. It functions in the pathway purine metabolism; IMP biosynthesis via de novo pathway; 5-formamido-1-(5-phospho-D-ribosyl)imidazole-4-carboxamide from 5-amino-1-(5-phospho-D-ribosyl)imidazole-4-carboxamide (10-formyl THF route): step 1/1. Its pathway is purine metabolism; IMP biosynthesis via de novo pathway; IMP from 5-formamido-1-(5-phospho-D-ribosyl)imidazole-4-carboxamide: step 1/1. The chain is Bifunctional purine biosynthesis protein PurH from Streptococcus equi subsp. zooepidemicus (strain H70).